Consider the following 236-residue polypeptide: Small ribosomal subunit protein uS3 (236 aa).

In terms of domain architecture, KH type-2 spans 39-107 (IREVLEKQLK…EVHLNIVEVR (69 aa)). The interval 214–236 (ASERRALEGGDSGGGRSRRDDRG) is disordered.

This sequence belongs to the universal ribosomal protein uS3 family. As to quaternary structure, part of the 30S ribosomal subunit. Forms a tight complex with proteins S10 and S14.

Binds the lower part of the 30S subunit head. Binds mRNA in the 70S ribosome, positioning it for translation. In Parvibaculum lavamentivorans (strain DS-1 / DSM 13023 / NCIMB 13966), this protein is Small ribosomal subunit protein uS3.